The primary structure comprises 616 residues: Polypeptide N-acetylgalactosaminyltransferase 3 (616 aa).

A helical; Signal-anchor for type II membrane protein transmembrane segment spans residues 13–33 (FFHWKLWKFSIIVFVFLVFLF). Residues 182–291 (LPTTSIIIVF…YGWLEPLLAR (110 aa)) form a catalytic subdomain A region. D275, H277, and H413 together coordinate Mn(2+). The interval 354 to 416 (PIRTPTFAGG…PCSVVGHVFR (63 aa)) is catalytic subdomain B. An N-linked (GlcNAc...) asparagine glycan is attached at N482. The 105-residue stretch at 512-616 (NRMCLDVGEN…FQKWIFGQND (105 aa)) folds into the Ricin B-type lectin domain. Residues C515 and C533 are joined by a disulfide bond. D517, E520, H534, and N539 together coordinate UDP-N-acetyl-alpha-D-galactosamine. A disulfide bond links C588 and C601.

The protein belongs to the glycosyltransferase 2 family. GalNAc-T subfamily. Mn(2+) serves as cofactor.

Its subcellular location is the golgi apparatus. It localises to the golgi stack membrane. It catalyses the reaction L-seryl-[protein] + UDP-N-acetyl-alpha-D-galactosamine = a 3-O-[N-acetyl-alpha-D-galactosaminyl]-L-seryl-[protein] + UDP + H(+). It carries out the reaction L-threonyl-[protein] + UDP-N-acetyl-alpha-D-galactosamine = a 3-O-[N-acetyl-alpha-D-galactosaminyl]-L-threonyl-[protein] + UDP + H(+). Its pathway is protein modification; protein glycosylation. In terms of biological role, catalyzes the initial reaction in O-linked oligosaccharide biosynthesis, the transfer of an N-acetyl-D-galactosamine residue to a serine or threonine residue on the protein receptor. Glycosylates FGF23. The chain is Polypeptide N-acetylgalactosaminyltransferase 3 (GALNT3) from Taeniopygia guttata (Zebra finch).